Reading from the N-terminus, the 199-residue chain is Neurotrophic factor BDNF precursor form (199 aa).

Residues 1 to 23 (GQGSLAYPGLRTQGNLETLSGPN) form a disordered region. A propeptide spanning residues 1–100 (GQGSLAYPGL…AANMSMRVRR (100 aa)) is cleaved from the precursor. The span at 12–23 (TQGNLETLSGPN) shows a compositional bias: polar residues. Asn-93 carries an N-linked (GlcNAc...) asparagine glycan. A disulfide bond links Cys-113 and Cys-180.

This sequence belongs to the NGF-beta family.

The protein localises to the secreted. Its function is as follows. Promotes the survival of neuronal populations that are all located either in the central nervous system or directly connected to it. This chain is Neurotrophic factor BDNF precursor form (BDNF), found in Morelia spilota (Carpet python).